The following is a 568-amino-acid chain: Pre-mRNA-processing protein 45 (568 aa).

Disordered regions lie at residues 199–232, 281–449, and 545–568; these read EPPK…AQDQ, LNQN…QQKI, and AGKG…RDEE. Over residues 286–364 the composition is skewed to basic and acidic residues; that stretch reads KTMRDDIGKR…SRDGDSDRSL (79 aa). Residues 365-379 show a composition bias toward low complexity; that stretch reads SRSLSASDRSYSRSR. Basic and acidic residues-rich tracts occupy residues 395–419, 426–440, and 557–568; these read RSPE…LERA, ERLE…DLRL, and RDGPVRFVRDEE.

Belongs to the SNW family. As to quaternary structure, associated with the spliceosome.

The protein localises to the nucleus. Involved in pre-mRNA splicing. The protein is Pre-mRNA-processing protein 45 (PRP45) of Yarrowia lipolytica (strain CLIB 122 / E 150) (Yeast).